The sequence spans 1368 residues: DNA-directed RNA polymerase subunit beta (1368 aa).

The protein belongs to the RNA polymerase beta chain family. The RNAP catalytic core consists of 2 alpha, 1 beta, 1 beta' and 1 omega subunit. When a sigma factor is associated with the core the holoenzyme is formed, which can initiate transcription.

The catalysed reaction is RNA(n) + a ribonucleoside 5'-triphosphate = RNA(n+1) + diphosphate. DNA-dependent RNA polymerase catalyzes the transcription of DNA into RNA using the four ribonucleoside triphosphates as substrates. This chain is DNA-directed RNA polymerase subunit beta, found in Burkholderia ambifaria (strain MC40-6).